Here is a 123-residue protein sequence, read N- to C-terminus: Protein Rev (123 aa).

2 positions are modified to phosphoserine; by host CK2: S5 and S8. Residues 18-26 (IIKILYQSN) form a homomultimerization region. 2 disordered regions span residues 24–49 (QSNPYPSPEGSRQARRNRRRRWRARQ) and 82–123 (TLDS…GAKN). Positions 34–50 (SRQARRNRRRRWRARQR) match the Nuclear localization signal and RNA-binding (RRE) motif. Residues 36 to 49 (QARRNRRRRWRARQ) are compositionally biased toward basic residues. A Nuclear export signal and binding to XPO1 motif is present at residues 73-84 (LPLPPIERLTLD). Residues 97 to 112 (PQGTETGTGSPNTPEG) show a composition bias toward polar residues.

The protein belongs to the HIV-1 REV protein family. Homomultimer; when bound to the RRE. Multimeric assembly is essential for activity and may involve XPO1. Binds to human KPNB1, XPO1, TNPO1, RANBP5 and IPO7. Interacts with the viral Integrase. Interacts with human KHDRBS1. Interacts with human NAP1; this interaction decreases Rev multimerization and stimulates its activity. Interacts with human DEAD-box helicases DDX3 and DDX24; these interactions may serve for viral RNA export to the cytoplasm and packaging, respectively. Interacts with human PSIP1; this interaction may inhibit HIV-1 DNA integration by promoting dissociation of the Integrase-LEDGF/p75 complex. Asymmetrically arginine dimethylated at one site by host PRMT6. Methylation impairs the RNA-binding activity and export of viral RNA from the nucleus to the cytoplasm. Post-translationally, phosphorylated by protein kinase CK2. Presence of, and maybe binding to the N-terminus of the regulatory beta subunit of CK2 is necessary for CK2-mediated Rev's phosphorylation.

It localises to the host nucleus. The protein resides in the host nucleolus. It is found in the host cytoplasm. Escorts unspliced or incompletely spliced viral pre-mRNAs (late transcripts) out of the nucleus of infected cells. These pre-mRNAs carry a recognition sequence called Rev responsive element (RRE) located in the env gene, that is not present in fully spliced viral mRNAs (early transcripts). This function is essential since most viral proteins are translated from unspliced or partially spliced pre-mRNAs which cannot exit the nucleus by the pathway used by fully processed cellular mRNAs. Rev itself is translated from a fully spliced mRNA that readily exits the nucleus. Rev's nuclear localization signal (NLS) binds directly to KPNB1/Importin beta-1 without previous binding to KPNA1/Importin alpha-1. KPNB1 binds to the GDP bound form of RAN (Ran-GDP) and targets Rev to the nucleus. In the nucleus, the conversion from Ran-GDP to Ran-GTP dissociates Rev from KPNB1 and allows Rev's binding to the RRE in viral pre-mRNAs. Rev multimerization on the RRE via cooperative assembly exposes its nuclear export signal (NES) to the surface. Rev can then form a complex with XPO1/CRM1 and Ran-GTP, leading to nuclear export of the complex. Conversion from Ran-GTP to Ran-GDP mediates dissociation of the Rev/RRE/XPO1/RAN complex, so that Rev can return to the nucleus for a subsequent round of export. Beside KPNB1, also seems to interact with TNPO1/Transportin-1, RANBP5/IPO5 and IPO7/RANBP7 for nuclear import. The nucleoporin-like HRB/RIP is an essential cofactor that probably indirectly interacts with Rev to release HIV RNAs from the perinuclear region to the cytoplasm. This Simian immunodeficiency virus (isolate MB66) (SIV-cpz) protein is Protein Rev.